Consider the following 439-residue polypeptide: tRNA modification GTPase MnmE (439 aa).

(6S)-5-formyl-5,6,7,8-tetrahydrofolate contacts are provided by Arg-20, Glu-78, and Lys-116. The region spanning 211–364 (GIYVAILGEP…LLSAIQKKVE (154 aa)) is the TrmE-type G domain. Residues 221–226 (NSGKST), 240–246 (SEYAGTT), and 265–268 (DTAG) contribute to the GTP site. Residues Ser-225 and Thr-246 each coordinate Mg(2+). Lys-439 provides a ligand contact to (6S)-5-formyl-5,6,7,8-tetrahydrofolate.

The protein belongs to the TRAFAC class TrmE-Era-EngA-EngB-Septin-like GTPase superfamily. TrmE GTPase family. As to quaternary structure, homodimer. Heterotetramer of two MnmE and two MnmG subunits. It depends on K(+) as a cofactor.

The protein localises to the cytoplasm. Functionally, exhibits a very high intrinsic GTPase hydrolysis rate. Involved in the addition of a carboxymethylaminomethyl (cmnm) group at the wobble position (U34) of certain tRNAs, forming tRNA-cmnm(5)s(2)U34. The chain is tRNA modification GTPase MnmE from Ehrlichia ruminantium (strain Welgevonden).